The primary structure comprises 320 residues: Citrate synthase (320 aa).

Residues H249 and D307 contribute to the active site.

It belongs to the citrate synthase family.

It carries out the reaction oxaloacetate + acetyl-CoA + H2O = citrate + CoA + H(+). It functions in the pathway carbohydrate metabolism; tricarboxylic acid cycle; isocitrate from oxaloacetate: step 1/2. This chain is Citrate synthase (gltA), found in Bartonella doshiae.